The following is a 686-amino-acid chain: Cation channel sperm-associated protein 1 (686 aa).

A compositionally biased stretch (basic and acidic residues) spans 1–15; that stretch reads MDQSSRRDESYHETH. Disordered regions lie at residues 1–57, 97–177, 207–271, and 289–318; these read MDQS…QQPY, TLPN…NRDH, DHHH…KSTA, and QSRE…RAHK. The Cytoplasmic segment spans residues 1-351; sequence MDQSSRRDES…QMILSLTQSL (351 aa). A compositionally biased stretch (basic residues) spans 25–35; it reads SHPHPHPHPTL. The segment covering 128 to 142 has biased composition (basic and acidic residues); sequence DPNHHPHQDDPHRPS. Residues 147-160 are compositionally biased toward polar residues; that stretch reads HPSSTGSHQGTTHQ. Composition is skewed to basic residues over residues 211–229 and 235–244; these read EGHH…KEQR and HMHHHIHHRS. Positions 245–271 are enriched in polar residues; sequence PSASQLSHKSHSTLATSPSHVGSKSTA. Residues 308 to 318 are compositionally biased toward basic residues; it reads QKRKKAQRAHK. A helical membrane pass occupies residues 352 to 373; the sequence is GFETFIFIVVCLNTVILVAQTF. Topologically, residues 374-382 are extracellular; the sequence is TELEIRGEW. A helical membrane pass occupies residues 383-404; that stretch reads YFMVLDSIFLSIYVLEAVLKLI. The Cytoplasmic portion of the chain corresponds to 405-412; that stretch reads ALGLEYFY. A helical transmembrane segment spans residues 413–435; the sequence is DPWNNLDFFIMVMAVLDFVLLQI. The Extracellular portion of the chain corresponds to 436-446; that stretch reads NSLSYSFYNHS. Residues 447-469 form a helical membrane-spanning segment; the sequence is LFRILKVFKSMRALRAIRVLRRL. The Cytoplasmic segment spans residues 470-487; it reads SILTSLHEVAGTLSGSLP. The chain crosses the membrane as a helical span at residues 488 to 510; sequence SITAILTLMFTCLFLFSVVLRAL. Residues 511-521 are Extracellular-facing; the sequence is FQDSDPKRFQN. The helical; Pore-forming intramembrane region spans 522-534; it reads IFTTLFTLFTMLT. At 535 to 551 the chain is on the extracellular side; the sequence is LDDWSLIYIDNRAQGAW. Residues 552–577 traverse the membrane as a helical segment; the sequence is YIIPILMIYIVIQYFIFLNLVIAVLV. The Cytoplasmic segment spans residues 578–686; it reads DNFQMALLKG…FEAGDDDYGK (109 aa).

It belongs to the cation channel sperm-associated (TC 1.A.1.19) family. Component of the CatSper complex or CatSpermasome composed of the core pore-forming members CATSPER1, CATSPER2, CATSPER3 and CATSPER4 as well as auxiliary members CATSPERB, CATSPERG2, CATSPERD, CATSPERE, CATSPERZ, C2CD6/CATSPERT, SLCO6C1, TMEM249, TMEM262 and EFCAB9. HSPA1 may be an additional auxiliary complex member. The core complex members CATSPER1, CATSPER2, CATSPER3 and CATSPER4 form a heterotetrameric channel. The auxiliary CATSPERB, CATSPERG2, CATSPERD and CATSPERE subunits form a pavilion-like structure over the pore which stabilizes the complex through interactions with CATSPER4, CATSPER3, CATSPER1 and CATSPER2 respectively. SLCO6C1 interacts with CATSPERE, and TMEM262/CATSPERH interacts with CATSPERB, further stabilizing the complex. C2CD6/CATSPERT interacts at least with CATSPERD and is required for targeting the CatSper complex in the flagellar membrane. Interacts with Ca(v)3.3/CACNA1I, leading to suppression of T-type calcium channel activity. As to expression, testis-specific.

The protein localises to the cell projection. Its subcellular location is the cilium. It localises to the flagellum membrane. It carries out the reaction Ca(2+)(in) = Ca(2+)(out). Its activity is regulated as follows. Activated by intracellular alkalinization. In contrast to the human ortholog, not activated by progesterone. In terms of biological role, pore-forming subunit of the CatSper complex, a sperm-specific voltage-gated calcium channel that plays a central role in sperm cell hyperactivation. Controls calcium entry to mediate the hyperactivated motility, a step needed for sperm motility which is essential late in the preparation of sperm for fertilization. The protein is Cation channel sperm-associated protein 1 (Catsper1) of Mus musculus (Mouse).